A 229-amino-acid chain; its full sequence is Non-structural protein P8 (229 aa).

Transmembrane regions (helical) follow at residues 119–139 (IIHMTLLVAAVVALLTSVCTL) and 162–182 (SLNPMLGVVNLGATFIMMVCA).

Belongs to the orbivirus NS3 family. As to quaternary structure, forms homooligomers via coiled-coil motif. Interacts with host OPTN; this interaction inhibits innate immune response.

Its subcellular location is the host cell membrane. It localises to the host Golgi apparatus. Its function is as follows. Plays a role in the inhibition of host innate immune response. Interacts with host OPTN and thus inhibits the recruitment of TBK1 to the host Golgi apparatus. In turn, downstream partner IRF3 cannot be activated and IFN-beta production is impaired. In terms of biological role, facilitates viral particle release either by increasing plasma membrane permeability through a viroporin-like activity or by viral budding. This Bluetongue virus 1 (isolate Australia) (BTV 1) protein is Non-structural protein P8 (Segment-10).